The following is a 179-amino-acid chain: DELTA-miturgitoxin-Cp2a (179 aa).

A signal peptide spans 1-20 (MKFSLFFGVLFLAILHSCLS). Residues 21–47 (ESEKDLTDEDHFRSSDSFLSEIQEESR) constitute a propeptide that is removed on maturation. The Processing quadruplet motif signature appears at 44-47 (EESR). Intrachain disulfides connect Cys-51/Cys-66, Cys-58/Cys-75, Cys-65/Cys-88, Cys-77/Cys-86, Cys-115/Cys-130, Cys-122/Cys-139, Cys-129/Cys-158, and Cys-141/Cys-156. Val-178 is subject to Valine amide.

Belongs to the spider toxin CSTX family. Double-CSTX subfamily. Post-translationally, cleavage of the propeptide depends on the processing quadruplet motif (XXXR, with at least one of X being E). As to expression, expressed by the venom gland.

It localises to the secreted. Its function is as follows. Spider venom toxin that exhibits cytolytic activity by forming an alpha-helix across the membrane. Lethal to insect larvae. The polypeptide is DELTA-miturgitoxin-Cp2a (Cheiracanthium punctorium (Yellow sac spider)).